The chain runs to 105 residues: Small ribosomal subunit protein eS24 (105 aa).

Residues 85 to 105 (SVIAKNEEPEEEPEEEAEDAE) form a disordered region. A compositionally biased stretch (acidic residues) spans 92-105 (EPEEEPEEEAEDAE).

This sequence belongs to the eukaryotic ribosomal protein eS24 family.

This chain is Small ribosomal subunit protein eS24, found in Methanosphaera stadtmanae (strain ATCC 43021 / DSM 3091 / JCM 11832 / MCB-3).